A 433-amino-acid polypeptide reads, in one-letter code: Enolase (433 aa).

Residue glutamine 163 coordinates (2R)-2-phosphoglycerate. Glutamate 205 (proton donor) is an active-site residue. Residues aspartate 241, glutamate 289, and aspartate 316 each coordinate Mg(2+). The (2R)-2-phosphoglycerate site is built by lysine 341, arginine 370, serine 371, and lysine 392. Lysine 341 (proton acceptor) is an active-site residue.

Belongs to the enolase family. Mg(2+) serves as cofactor.

The protein resides in the cytoplasm. Its subcellular location is the secreted. It is found in the cell surface. The enzyme catalyses (2R)-2-phosphoglycerate = phosphoenolpyruvate + H2O. Its pathway is carbohydrate degradation; glycolysis; pyruvate from D-glyceraldehyde 3-phosphate: step 4/5. In terms of biological role, catalyzes the reversible conversion of 2-phosphoglycerate (2-PG) into phosphoenolpyruvate (PEP). It is essential for the degradation of carbohydrates via glycolysis. This Treponema denticola (strain ATCC 35405 / DSM 14222 / CIP 103919 / JCM 8153 / KCTC 15104) protein is Enolase.